Reading from the N-terminus, the 485-residue chain is G2/mitotic-specific cyclin-A1 (485 aa).

The segment at 1 to 24 (MRSALSLKPSNGNAAKSQAVNNKN) is disordered. The segment covering 8–24 (KPSNGNAAKSQAVNNKN) has biased composition (polar residues).

Belongs to the cyclin family. Cyclin AB subfamily. Expressed in the cell lineages ABarp, C and E as well as the NSM neuroblasts.

In terms of biological role, involved in the control of the cell cycle after S phase. May bind to and activate cdk-1 and/or cdk-2 to promote cell cycle progression. Necessary for embryogenesis. The sequence is that of G2/mitotic-specific cyclin-A1 (cya-1) from Caenorhabditis elegans.